Reading from the N-terminus, the 123-residue chain is Large ribosomal subunit protein uL29 (123 aa).

N6-acetyllysine is present on lysine 19. Residue lysine 25 forms a Glycyl lysine isopeptide (Lys-Gly) (interchain with G-Cter in SUMO2) linkage. Position 29 is a phosphoserine (serine 29). Residue lysine 43 is modified to N6-acetyllysine.

This sequence belongs to the universal ribosomal protein uL29 family. Component of the large ribosomal subunit.

The protein resides in the cytoplasm. Component of the large ribosomal subunit. The ribosome is a large ribonucleoprotein complex responsible for the synthesis of proteins in the cell. The chain is Large ribosomal subunit protein uL29 (RPL35) from Sus scrofa (Pig).